The following is a 2289-amino-acid chain: Protein Ycf2 (2289 aa).

ATP is bound at residue 1643–1650 (GSIGTGRS).

It belongs to the Ycf2 family.

Its subcellular location is the plastid. It localises to the chloroplast stroma. Its function is as follows. Probable ATPase of unknown function. Its presence in a non-photosynthetic plant (Epifagus virginiana) and experiments in tobacco indicate that it has an essential function which is probably not related to photosynthesis. This is Protein Ycf2 from Capsella bursa-pastoris (Shepherd's purse).